Here is a 152-residue protein sequence, read N- to C-terminus: Protein E6 (152 aa).

2 zinc fingers span residues 33 to 69 (CIFCTKQLTTTELQAFALRELNVVWRRGAPYGACARC) and 106 to 142 (CYMCHKPLVKEEKDRHRNEKRRLHKISGHWRGSCQYC).

Belongs to the papillomaviridae E6 protein family. Forms homodimers. Interacts with ubiquitin-protein ligase UBE3A/E6-AP; this interaction stimulates UBE3A ubiquitin activity. Interacts with host TP53 and EP300; this interaction inhibits TP53 activity.

The protein resides in the host cytoplasm. It localises to the host nucleus. Functionally, plays a major role in the induction and maintenance of cellular transformation. E6 associates with host UBE3A/E6-AP ubiquitin-protein ligase and modulates its activity. Sequesters tumor suppressor TP53 in the host cytoplasm and modulates its activity by interacting with host EP300 that results in the reduction of TP53 acetylation and activation. In turn, apoptosis induced by DNA damage is inhibited. E6 also protects host keratinocytes from apoptosis by mediating the degradation of host BAK1. May also inhibit host immune response. The sequence is that of Protein E6 from Human papillomavirus 3.